The following is a 67-amino-acid chain: Conotoxin LeDr192 (67 aa).

The signal sequence occupies residues 1-19 (MRCFPVFIILLLLIASAPC). Residues 20 to 49 (FDARTKTDDDVPLSPLRDNLKRTIRTRLNI) constitute a propeptide that is removed on maturation. The residue at position 65 (T65) is a Threonine amide.

It belongs to the conotoxin T superfamily. In terms of processing, contains 2 disulfide bonds that can be either 'C1-C3, C2-C4' or 'C1-C4, C2-C3', since these disulfide connectivities have been observed for conotoxins with cysteine framework V (for examples, see AC P0DQQ7 and AC P81755). As to expression, expressed by the venom duct.

It is found in the secreted. The polypeptide is Conotoxin LeDr192 (Conus litteratus (Lettered cone)).